The following is a 150-amino-acid chain: UPF0178 protein AHA_0543 (150 aa).

The protein belongs to the UPF0178 family.

This is UPF0178 protein AHA_0543 from Aeromonas hydrophila subsp. hydrophila (strain ATCC 7966 / DSM 30187 / BCRC 13018 / CCUG 14551 / JCM 1027 / KCTC 2358 / NCIMB 9240 / NCTC 8049).